The following is a 1337-amino-acid chain: Sister chromatid cohesion protein PDS5 homolog A (1337 aa).

Methionine 1 carries the N-acetylmethionine modification. Residues 393-429 (ALVNDQLLGFVRERTLDKRWRVRKEAMMGLAQLYKKY) form an HEAT repeat. Serine 1097 carries the post-translational modification Phosphoserine. Position 1146 is an N6-acetyllysine (lysine 1146). Residues 1150-1337 (ATGRKPYVRS…PAERQIDLQR (188 aa)) form a disordered region. A compositionally biased stretch (polar residues) spans 1159–1180 (STGTETGSNINVNSELNPSTGN). Serine 1195 bears the Phosphoserine mark. Threonine 1208 is modified (phosphothreonine). Lysine 1211 carries the post-translational modification N6-acetyllysine. Positions 1223 to 1233 (SDQATQGNISS) are enriched in polar residues. At lysine 1290 the chain carries N6-acetyllysine. Phosphoserine is present on serine 1305. Over residues 1321-1337 (DLAKKAAPAERQIDLQR) the composition is skewed to basic and acidic residues.

Belongs to the PDS5 family. In terms of assembly, interacts with the cohesin complex. Interacts with WAPL (via FGF motifs) or CDCA5 (via the FGF motif); the interaction is direct, cohesin-dependent and competitive. Interacts with SMC3. Interacts with TP63. In terms of tissue distribution, highest level in colon. Low levels in lung, ovary, breast and kidney. Reduced level in renal tumor tissue. Isoform 2 is expressed in kidney.

It localises to the nucleus. Its function is as follows. Probable regulator of sister chromatid cohesion in mitosis which may stabilize cohesin complex association with chromatin. May couple sister chromatid cohesion during mitosis to DNA replication. Cohesion ensures that chromosome partitioning is accurate in both meiotic and mitotic cells and plays an important role in DNA repair. The sequence is that of Sister chromatid cohesion protein PDS5 homolog A from Homo sapiens (Human).